The primary structure comprises 241 residues: 2-C-methyl-D-erythritol 4-phosphate cytidylyltransferase (241 aa).

The protein belongs to the IspD/TarI cytidylyltransferase family. IspD subfamily. Homodimer.

The catalysed reaction is 2-C-methyl-D-erythritol 4-phosphate + CTP + H(+) = 4-CDP-2-C-methyl-D-erythritol + diphosphate. The protein operates within isoprenoid biosynthesis; isopentenyl diphosphate biosynthesis via DXP pathway; isopentenyl diphosphate from 1-deoxy-D-xylulose 5-phosphate: step 2/6. In terms of biological role, catalyzes the formation of 4-diphosphocytidyl-2-C-methyl-D-erythritol from CTP and 2-C-methyl-D-erythritol 4-phosphate (MEP). This Yersinia pseudotuberculosis serotype IB (strain PB1/+) protein is 2-C-methyl-D-erythritol 4-phosphate cytidylyltransferase.